A 225-amino-acid chain; its full sequence is LHFPL tetraspan subfamily member 2a protein (225 aa).

Transmembrane regions (helical) follow at residues 11 to 31, 99 to 119, 129 to 149, and 178 to 198; these read MLWT…FLST, IFLA…IFTM, IFNV…VGLV, and AGWA…CAVF.

This sequence belongs to the LHFP family.

It localises to the membrane. In terms of biological role, plays a role in fertility. Involved in distal reproductive tract development. In Danio rerio (Zebrafish), this protein is LHFPL tetraspan subfamily member 2a protein.